The sequence spans 195 residues: GTP cyclohydrolase 1 (195 aa).

Residues Cys-85, His-88, and Cys-157 each contribute to the Zn(2+) site.

This sequence belongs to the GTP cyclohydrolase I family. Toroid-shaped homodecamer, composed of two pentamers of five dimers.

The enzyme catalyses GTP + H2O = 7,8-dihydroneopterin 3'-triphosphate + formate + H(+). The protein operates within cofactor biosynthesis; 7,8-dihydroneopterin triphosphate biosynthesis; 7,8-dihydroneopterin triphosphate from GTP: step 1/1. The protein is GTP cyclohydrolase 1 of Clostridium acetobutylicum (strain ATCC 824 / DSM 792 / JCM 1419 / IAM 19013 / LMG 5710 / NBRC 13948 / NRRL B-527 / VKM B-1787 / 2291 / W).